The primary structure comprises 592 residues: MNIYRTHVCNELGVAHVGNEVALSGWVYRKRDHGGLLFVDLRDFYGITQLIFNESENPELFNRMATIGLESVITVRGIVAERSEDNVNASIETGHVEVKVSTLTVVSEAAPLPLHVPTSFSYPEDIRLQHRFLDLRCDKVKNSILLRSMVVSELRRAMEALGFIEVHTPILTSSSPEGARDYIVPSRTHAGKFYALPQAPQIFKQLLMVGGFDKYFQIAPCFRDEDSRADRSPGEFYQLDMEMSFVTQEDVFAAIEPVLYGLFAKFAGADKKVDRQFPRITYRDSMIRYGSDKPDLRNPLVISDVTEIFRNSGFRTFQAGVEAGEVVRAIPAPNTSGKPRSFFDDKIERAKEFGARGLGYVTYEADGTAKGPIAKFLSEDELARIRSAAGVGNGDSVFFMSDTADKAADFAGKIRELLGLELGLIEHDTFKFCWIVDFPYFKCEDGELDFCHNPFSMPQGEMEALEQQNPLDIIAYQYDIVCNGIEISSGAIRNHRLDVMYKAFSMVGYDEQTVNSKFGALVRAFKFGAPPHGGLAPGIDRIVMLLADAPNIREVICFPLNQTGEDLLMGAPSEVSPAHLQELSIALNIKRK.

Glu-177 contacts L-aspartate. The aspartate stretch occupies residues 201–204 (QIFK). Arg-223 and His-452 together coordinate L-aspartate. ATP is bound at residue 223–225 (RDE). Residue Glu-486 coordinates ATP. Position 493 (Arg-493) interacts with L-aspartate. 538–541 (GIDR) provides a ligand contact to ATP.

This sequence belongs to the class-II aminoacyl-tRNA synthetase family. Type 1 subfamily. As to quaternary structure, homodimer.

The protein resides in the cytoplasm. The enzyme catalyses tRNA(Asx) + L-aspartate + ATP = L-aspartyl-tRNA(Asx) + AMP + diphosphate. Aspartyl-tRNA synthetase with relaxed tRNA specificity since it is able to aspartylate not only its cognate tRNA(Asp) but also tRNA(Asn). Reaction proceeds in two steps: L-aspartate is first activated by ATP to form Asp-AMP and then transferred to the acceptor end of tRNA(Asp/Asn). The protein is Aspartate--tRNA(Asp/Asn) ligase of Anaplasma marginale (strain Florida).